The following is a 105-amino-acid chain: Met repressor (105 aa).

The protein belongs to the MetJ family. In terms of assembly, homodimer.

It localises to the cytoplasm. Functionally, this regulatory protein, when combined with SAM (S-adenosylmethionine) represses the expression of the methionine regulon and of enzymes involved in SAM synthesis. The polypeptide is Met repressor (Citrobacter koseri (strain ATCC BAA-895 / CDC 4225-83 / SGSC4696)).